We begin with the raw amino-acid sequence, 141 residues long: Large ribosomal subunit protein uL11 (141 aa).

This sequence belongs to the universal ribosomal protein uL11 family. In terms of assembly, part of the ribosomal stalk of the 50S ribosomal subunit. Interacts with L10 and the large rRNA to form the base of the stalk. L10 forms an elongated spine to which L12 dimers bind in a sequential fashion forming a multimeric L10(L12)X complex. Post-translationally, one or more lysine residues are methylated.

Forms part of the ribosomal stalk which helps the ribosome interact with GTP-bound translation factors. In Chlamydia pneumoniae (Chlamydophila pneumoniae), this protein is Large ribosomal subunit protein uL11.